Here is a 121-residue protein sequence, read N- to C-terminus: Basic phospholipase A2 homolog (121 aa).

Disulfide bonds link Cys26–Cys115, Cys28–Cys44, Cys43–Cys95, Cys49–Cys121, Cys50–Cys88, Cys57–Cys81, and Cys75–Cys86.

This sequence belongs to the phospholipase A2 family. Group II subfamily. K49 sub-subfamily. As to quaternary structure, homodimer. In terms of tissue distribution, expressed by the venom gland.

It localises to the secreted. Snake venom phospholipase A2 homolog that lacks enzymatic activity, but has myotoxic and cytolytic activities. This is Basic phospholipase A2 homolog from Metlapilcoatlus nummifer (Mexican jumping pitviper).